The chain runs to 89 residues: Probable Fe(2+)-trafficking protein (89 aa).

It belongs to the Fe(2+)-trafficking protein family.

Functionally, could be a mediator in iron transactions between iron acquisition and iron-requiring processes, such as synthesis and/or repair of Fe-S clusters in biosynthetic enzymes. The chain is Probable Fe(2+)-trafficking protein from Acinetobacter baumannii (strain SDF).